Consider the following 621-residue polypeptide: uncharacterized protein (621 aa).

3 consecutive transmembrane segments (helical) span residues phenylalanine 240–tryptophan 260, leucine 548–valine 568, and valine 587–methionine 607.

The protein localises to the cell membrane. This is an uncharacterized protein from Mycoplasma pneumoniae (strain ATCC 29342 / M129 / Subtype 1) (Mycoplasmoides pneumoniae).